A 788-amino-acid chain; its full sequence is Multi-functional prenyltransferase ltmE (788 aa).

Substrate-binding residues include K18 and H51. D58 lines the Mg(2+) pocket. Positions 67, 151, 152, 182, 189, and 199 each coordinate substrate. The disordered stretch occupies residues 283 to 337 (DTLDGDDLTRPSTITQHEQDDHVDRAAIDAKSDASGSSNKSLTPPETAPTTDTLS). Residues 299–314 (HEQDDHVDRAAIDAKS) are compositionally biased toward basic and acidic residues. Over residues 316 to 337 (ASGSSNKSLTPPETAPTTDTLS) the composition is skewed to polar residues. 404–405 (MA) is an L-tryptophan binding site. Substrate is bound by residues R427, R599, K601, Y603, and Y687.

It in the N-terminal section; belongs to the FPP/GGPP synthase family. The protein in the C-terminal section; belongs to the tryptophan dimethylallyltransferase family. Requires Mg(2+) as cofactor.

Its pathway is secondary metabolite biosynthesis. Its function is as follows. Multi-functional prenyltransferase; part of the gene cluster that mediates the biosynthesis of lolitrems, indole-diterpene mycotoxins that are potent tremorgens in mammals, and are synthesized by clavicipitaceous fungal endophytes in association with their grass hosts. The geranylgeranyl diphosphate (GGPP) synthase ltmG is proposed to catalyze the first step in lolitrem biosynthesis. LtmG catalyzes a series of iterative condensations of isopentenyl diphosphate (IPP) with dimethylallyl diphosphate (DMAPP), geranyl diphosphate (GPP), and farnesyl diphosphate (FPP), to form GGPP. GGPP then condenses with indole-3-glycerol phosphate to form 3-geranylgeranylindole, an acyclic intermediate, to be incorporated into paxilline. Either ltmG or ltmC could be responsible for this step, as both are putative prenyl transferases. The FAD-dependent monooxygenase ltmM then catalyzes the epoxidation of the two terminal alkenes of the geranylgeranyl moiety, which is subsequently cyclized by ltmB, to paspaline. The cytochrome P450 monooxygenases ltmQ and ltmP can sequentially oxidize paspaline to terpendole E and terpendole F. Alternatively, ltmP converts paspaline to an intermediate which is oxidized by ltmQ to terpendole F. LtmF, ltmK, ltmE and ltmJ appear to be unique to the epichloe endophytes. The prenyltransferase ltmF is involved in the 27-hydroxyl-O-prenylation. The cytochrome P450 monooxygenase ltmK is required for the oxidative acetal ring formation. The multi-functional prenyltransferase ltmE is required for C20- and C21-prenylations of the indole ring of paspalanes and acts together with the cytochrome P450 monooxygenase ltmJ to yield lolitremanes by multiple oxidations and ring closures. The stereoisomer pairs of lolitriol and lolitrem N or lolitrem B and lolitrem F may be attributed to variations in the way in which ring closure can occur under the action of ltmJ. While the major product of this pathway is lolitrem B, the prenyl transferases and cytochrome P450 monooxygenases identified in this pathway have a remarkable versatility in their regio- and stereo-specificities to generate a diverse range of metabolites that are products of a metabolic grid rather than a linear pathway. This is Multi-functional prenyltransferase ltmE from Epichloe festucae var. lolii (Neotyphodium lolii).